The primary structure comprises 356 residues: Neutral protease 2 homolog UREG_03761 (356 aa).

The first 19 residues, 1 to 19 (MRFSSSFLSVLALASQALA), serve as a signal peptide directing secretion. The propeptide occupies 20–181 (FPLNDLPTTD…ALPEATLDKR (162 aa)). Cystine bridges form between C189–C259 and C266–C284. Residue H308 participates in Zn(2+) binding. E309 is a catalytic residue. The Zn(2+) site is built by H312 and D323.

Belongs to the peptidase M35 family. The cofactor is Zn(2+).

Its subcellular location is the secreted. It carries out the reaction Preferential cleavage of bonds with hydrophobic residues in P1'. Also 3-Asn-|-Gln-4 and 8-Gly-|-Ser-9 bonds in insulin B chain.. Functionally, secreted metalloproteinase that allows assimilation of proteinaceous substrates. Shows high activities on basic nuclear substrates such as histone and protamine. The protein is Neutral protease 2 homolog UREG_03761 of Uncinocarpus reesii (strain UAMH 1704).